The following is a 217-amino-acid chain: Ribonuclease HII (217 aa).

Positions 12-201 (DLVAGVDEVG…VRTAHEARAA (190 aa)) constitute an RNase H type-2 domain. Residues aspartate 18, glutamate 19, and aspartate 110 each coordinate a divalent metal cation.

It belongs to the RNase HII family. The cofactor is Mn(2+). It depends on Mg(2+) as a cofactor.

It is found in the cytoplasm. It catalyses the reaction Endonucleolytic cleavage to 5'-phosphomonoester.. In terms of biological role, endonuclease that specifically degrades the RNA of RNA-DNA hybrids. The sequence is that of Ribonuclease HII from Pseudomonas syringae pv. tomato (strain ATCC BAA-871 / DC3000).